Consider the following 319-residue polypeptide: Acetyl esterase (319 aa).

The Involved in the stabilization of the negatively charged intermediate by the formation of the oxyanion hole motif lies at 91–93 (HGG). Catalysis depends on residues Ser165, Asp262, and His292.

This sequence belongs to the 'GDXG' lipolytic enzyme family. Homodimer. Interacts with MalT and MelA.

The protein resides in the cytoplasm. Functionally, displays esterase activity towards short chain fatty esters (acyl chain length of up to 8 carbons). Able to hydrolyze triacetylglycerol (triacetin) and tributyrylglycerol (tributyrin), but not trioleylglycerol (triolein) or cholesterol oleate. Negatively regulates MalT activity by antagonizing maltotriose binding. Inhibits MelA galactosidase activity. The polypeptide is Acetyl esterase (Escherichia coli O8 (strain IAI1)).